The chain runs to 214 residues: Ribonuclease HII (214 aa).

An RNase H type-2 domain is found at 26 to 214; that stretch reads EIVCGVDEAG…PVRAALDLIR (189 aa). 3 residues coordinate a divalent metal cation: Asp32, Glu33, and Asp124.

The protein belongs to the RNase HII family. Requires Mn(2+) as cofactor. Mg(2+) serves as cofactor.

The protein localises to the cytoplasm. It carries out the reaction Endonucleolytic cleavage to 5'-phosphomonoester.. In terms of biological role, endonuclease that specifically degrades the RNA of RNA-DNA hybrids. This Burkholderia cenocepacia (strain HI2424) protein is Ribonuclease HII.